A 189-amino-acid polypeptide reads, in one-letter code: HGPRTase-like protein (189 aa).

The protein belongs to the purine/pyrimidine phosphoribosyltransferase family. Archaeal HPRT subfamily.

Functionally, may catalyze a purine salvage reaction, the substrate is unknown. The protein is HGPRTase-like protein of Halorubrum lacusprofundi (strain ATCC 49239 / DSM 5036 / JCM 8891 / ACAM 34).